The following is a 205-amino-acid chain: ATP phosphoribosyltransferase (205 aa).

The protein belongs to the ATP phosphoribosyltransferase family. Short subfamily. In terms of assembly, heteromultimer composed of HisG and HisZ subunits.

The protein localises to the cytoplasm. The enzyme catalyses 1-(5-phospho-beta-D-ribosyl)-ATP + diphosphate = 5-phospho-alpha-D-ribose 1-diphosphate + ATP. It functions in the pathway amino-acid biosynthesis; L-histidine biosynthesis; L-histidine from 5-phospho-alpha-D-ribose 1-diphosphate: step 1/9. Functionally, catalyzes the condensation of ATP and 5-phosphoribose 1-diphosphate to form N'-(5'-phosphoribosyl)-ATP (PR-ATP). Has a crucial role in the pathway because the rate of histidine biosynthesis seems to be controlled primarily by regulation of HisG enzymatic activity. The protein is ATP phosphoribosyltransferase of Nitratiruptor sp. (strain SB155-2).